Reading from the N-terminus, the 494-residue chain is MAEIEELNDQMKVRREKMENLRDAGIDPFGHKFTRTHNSQELHEAYDEKTKEELHELALSGIVAGRLMTKRGKGKVGFAHLQDREGQIQLYVRKDEVGEENYEIFKKADLGDFLGVEGEIMKTDMGELSIKAKKLTFLSKALRPLPEKFHGLTDTETRYRKRYLDLISNKESFNRFVTRSKIISEIRRYMDGRGYLEVETPVLNNEAGGASARPFYTHHNSLDIDMALRIATELHLKRLIVGGMEKVYELGRVFRNEGMDMTHNPEFTTMESYEAYADFEDIMDLTEGIFQHVAKTVVGQDVLEYDGKEINVGGKFKRVHMVDAIKEVAGVDFWPEMTFEEATALAKEHDIHVEKHFTSVGHIINEFFEKYVEETLIQPTFVFGHPKEISPLAKMNEKDPRFTDRFELFINGKEYANAFSELNDPIDQLERFEAQAKAKELGDDEATGVDYDYVEALEHGMPPTGGLGIGIDRLVMLFTGTTSIRDVLLFPTMK.

The Mg(2+) site is built by E407 and E414.

It belongs to the class-II aminoacyl-tRNA synthetase family. Homodimer. It depends on Mg(2+) as a cofactor.

It localises to the cytoplasm. The catalysed reaction is tRNA(Lys) + L-lysine + ATP = L-lysyl-tRNA(Lys) + AMP + diphosphate. In Lactococcus lactis subsp. cremoris (strain MG1363), this protein is Lysine--tRNA ligase.